A 140-amino-acid polypeptide reads, in one-letter code: uncharacterized protein (140 aa).

This is an uncharacterized protein from Acidianus ambivalens (Desulfurolobus ambivalens).